Reading from the N-terminus, the 371-residue chain is MARWATMSTETTGTGARDEGPRPGDPADSPFVRACRRKPGPHTPVWFMRQAGRSLPEYRKIRASVAMLESCRRPELITEITLQPVRRHGVDAAILFSDIVVPVAAAGVALDIVPGTGPVVNDPVTTAADVDRIRPISREDVPYVDEAVRMLVGELGATPLIGFAGAPFTLASYLIEGGPSRNHTKTKALMYGDPDLWHALASRLAEVTLAFLKVQIDAGVSAVQLFDSWAGALSEADYRRYVQPHSQAVLAGLADAGVPRIHFGVGTGELLAAMGEAGADVVGVDWRTPLDVATRRVGSERAVQGNLDPCLLFAPWPVIEAEVRRVLAQGRAAPGHIFNLGHGVLPETDPDVLTRVVALIHELTARPNARS.

Residues 1 to 14 (MARWATMSTETTGT) show a composition bias toward polar residues. The interval 1-30 (MARWATMSTETTGTGARDEGPRPGDPADSP) is disordered. Substrate-binding positions include 49–53 (RQAGR), Asp98, Tyr173, Ser228, and His342.

This sequence belongs to the uroporphyrinogen decarboxylase family. In terms of assembly, homodimer.

The protein localises to the cytoplasm. The catalysed reaction is uroporphyrinogen III + 4 H(+) = coproporphyrinogen III + 4 CO2. Its pathway is porphyrin-containing compound metabolism; protoporphyrin-IX biosynthesis; coproporphyrinogen-III from 5-aminolevulinate: step 4/4. Its function is as follows. Catalyzes the decarboxylation of four acetate groups of uroporphyrinogen-III to yield coproporphyrinogen-III. The sequence is that of Uroporphyrinogen decarboxylase from Salinispora tropica (strain ATCC BAA-916 / DSM 44818 / JCM 13857 / NBRC 105044 / CNB-440).